The sequence spans 110 residues: Large ribosomal subunit protein uL22 (110 aa).

The protein belongs to the universal ribosomal protein uL22 family. In terms of assembly, part of the 50S ribosomal subunit.

In terms of biological role, this protein binds specifically to 23S rRNA; its binding is stimulated by other ribosomal proteins, e.g. L4, L17, and L20. It is important during the early stages of 50S assembly. It makes multiple contacts with different domains of the 23S rRNA in the assembled 50S subunit and ribosome. The globular domain of the protein is located near the polypeptide exit tunnel on the outside of the subunit, while an extended beta-hairpin is found that lines the wall of the exit tunnel in the center of the 70S ribosome. The polypeptide is Large ribosomal subunit protein uL22 (Saccharophagus degradans (strain 2-40 / ATCC 43961 / DSM 17024)).